A 64-amino-acid chain; its full sequence is Anti-sigma-G factor Gin (64 aa).

Positions 11, 14, 30, and 33 each coordinate Zn(2+).

As to quaternary structure, probably functions as a homodimer. Interacts with sigma-G factor, recognition occurs via the first 71 residues of sigma-G. Zn(2+) serves as cofactor.

An anti-sigma-G factor, prevents premature activation of sigma-G factor in the forespore; overexpression leads to 1000-fold reduction in spore formation, spore formation stops after engulfment. Overexpression also inhibits sigma-G transcription activation activity. When both Gin and sigma-G are expressed in E.coli Gin inhibits sigma-G, strongly suggesting Gin inhibits by direct physical interaction. The sequence is that of Anti-sigma-G factor Gin from Bacillus subtilis (strain 168).